The primary structure comprises 242 residues: Agamous-like MADS-box protein MADS4 (242 aa).

The MADS-box domain maps to 1–61; sequence MGRGRVELKR…GKLYEFCSSS (61 aa). Positions 89 to 185 constitute a K-box domain; it reads ELSSQQEYLK…GTQVNQLQWN (97 aa).

As to expression, expressed in flowers and seeds.

The protein localises to the nucleus. Its function is as follows. Probable transcription factor involved in flower development. The chain is Agamous-like MADS-box protein MADS4 from Vitis vinifera (Grape).